Consider the following 437-residue polypeptide: Pyrophosphate--fructose 6-phosphate 1-phosphotransferase (437 aa).

Residue glycine 27 coordinates diphosphate. Aspartate 122 serves as a coordination point for Mg(2+). Substrate contacts are provided by residues threonine 147–aspartate 149, methionine 193–arginine 195, glutamate 261, and tyrosine 323–arginine 326. The active-site Proton acceptor is the aspartate 149.

This sequence belongs to the phosphofructokinase type A (PFKA) family. PPi-dependent PFK group II subfamily. Clade 'Short' sub-subfamily. As to quaternary structure, homotetramer. Requires Mg(2+) as cofactor. It depends on Mn(2+) as a cofactor.

It localises to the cytoplasm. The catalysed reaction is beta-D-fructose 6-phosphate + diphosphate = beta-D-fructose 1,6-bisphosphate + phosphate + H(+). The protein operates within carbohydrate degradation; glycolysis; D-glyceraldehyde 3-phosphate and glycerone phosphate from D-glucose: step 3/4. Activated by AMP. Probably promotes oligomerization of the enzyme. Catalyzes the phosphorylation of D-fructose 6-phosphate, the first committing step of glycolysis. Uses inorganic phosphate (PPi) as phosphoryl donor instead of ATP like common ATP-dependent phosphofructokinases (ATP-PFKs), which renders the reaction reversible, and can thus function both in glycolysis and gluconeogenesis. Consistently, PPi-PFK can replace the enzymes of both the forward (ATP-PFK) and reverse (fructose-bisphosphatase (FBPase)) reactions. The protein is Pyrophosphate--fructose 6-phosphate 1-phosphotransferase of Naegleria fowleri (Brain eating amoeba).